We begin with the raw amino-acid sequence, 78 residues long: Lantibiotic cinnamycin (78 aa).

Positions 1–59 (MTASILQQSVVDADFRAALLENPAAFGASAAALPTPVEAQDQASLDFWTKDIAATEAFA) are excised as a propeptide. 2 consecutive cross-links (beta-methyllanthionine (Cys-Thr)) follow at residues 60 to 77 (CRQS…DGNT) and 64 to 70 (CSFGPFT). Positions 63 to 73 (SCSFGPFTFVC) form a cross-link, lanthionine (Ser-Cys). The lysinoalanine (Ser-Lys) cross-link spans 65–78 (SFGPFTFVCDGNTK). At aspartate 74 the chain carries (3R)-3-hydroxyaspartate.

It belongs to the type B lantibiotic family. Maturation of lantibiotics involves the enzymatic conversion of Thr, and Ser into dehydrated AA and the formation of thioether bonds with cysteine or the formation of dialkylamine bonds with lysine. This is followed by membrane translocation and cleavage of the modified precursor.

Can act as inhibitor of the enzyme phospholipase A2, and of the angiotensin-converting enzyme. Shows inhibitory activities against herpes simplex virus and immunopotentiating activities. Its antimicrobial activities are not very pronounced. The sequence is that of Lantibiotic cinnamycin (cinA) from Streptomyces griseoverticillatus (Streptoverticillium griseoverticillatum).